Here is a 353-residue protein sequence, read N- to C-terminus: Guanidino acid hydrolase, mitochondrial (353 aa).

The N-terminal 33 residues, 1–33, are a transit peptide targeting the mitochondrion; the sequence is MLQLLKSSWVRSAGSGVVTWRASAGLFCPGTRQ. Residues 29 to 52 form a disordered region; it reads PGTRQASDTSDTLHHPSPSSESQV. Mn(2+) contacts are provided by His163 and His188. Residue Lys194 is modified to N6-acetyllysine. N6-acetyllysine; alternate is present on Lys218. An N6-succinyllysine; alternate modification is found at Lys218. Asp279 lines the Mn(2+) pocket.

It belongs to the arginase family. Agmatinase subfamily. Requires Mn(2+) as cofactor.

It is found in the mitochondrion. The catalysed reaction is 3-guanidinopropanoate + H2O = urea + beta-alanine. It carries out the reaction 4-guanidinobutanoate + H2O = urea + 4-aminobutanoate. The enzyme catalyses taurocyamine + H2O = urea + taurine. It catalyses the reaction L-arginine + H2O = urea + L-ornithine. The protein operates within nitrogen metabolism; urea cycle; L-ornithine and urea from L-arginine: step 1/1. Functionally, hydrolyzes linear guanidino acids to form urea and the corresponding amines. Displays specificity for substrates having a negatively charged head group and short chains including taurocyamine, guanidino propanoic and butanoic acids. May protect cells by detoxifying potentially harmful amounts of guanidino acids. Metabolizes L-arginine with low efficiency. The protein is Guanidino acid hydrolase, mitochondrial (Agmat) of Rattus norvegicus (Rat).